Consider the following 22-residue polypeptide: Motilin (22 aa).

Positions 1–11 (FVPFFTQSDIQ) are enriched in polar residues. Residues 1–22 (FVPFFTQSDIQKMQEKERNKGQ) are disordered. Basic and acidic residues predominate over residues 12–22 (KMQEKERNKGQ).

Belongs to the motilin family.

It localises to the secreted. Its function is as follows. Plays an important role in the regulation of interdigestive gastrointestinal motility and indirectly causes rhythmic contraction of duodenal and colonic smooth muscle. The protein is Motilin (MLN) of Gallus gallus (Chicken).